The chain runs to 445 residues: MHIIAISINHRTADVALREKVAFKADAIRESHLDLFETKSILENVILSTCNRTEVYAVADQIHTGRYYIQRFLARKFGLEVDEIKEMSEVFVGDEAVEHIFRVTAGLDSIVLGETQILGQMRDAFFIAQEEGTTGTIFNHLFKQAITFAKRAHHETDIADNAVSVSYAAVELAKKVFGNLKSKHAVIVGAGEMSELSLLNLLGAGIDNITVVNRTKERAQQLAEKHQTQYADLSNLNELLVNADIVISSTSAQNYVITQEMMNNVLDQRRHEPMVLIDIAVPRDIDPAIELDMNVFSYDIDDLKGLVDANLRERQAAADQIAEQIPAEINEHNDWVNMLGVVPVIRALREKAMHIQQDTMDSIDRKLPDLSERERKVISKHTKSIINQMLKDPIKQAKELSNDKNSSEKLELFQNIFDIEAESEYKKSLAKKERKLSARHILGFE.

Substrate-binding positions include 49-52 (TCNR), Ser109, 114-116 (ETQ), and Gln120. Cys50 functions as the Nucleophile in the catalytic mechanism. 189–194 (GAGEMS) lines the NADP(+) pocket.

It belongs to the glutamyl-tRNA reductase family. As to quaternary structure, homodimer.

The catalysed reaction is (S)-4-amino-5-oxopentanoate + tRNA(Glu) + NADP(+) = L-glutamyl-tRNA(Glu) + NADPH + H(+). It functions in the pathway porphyrin-containing compound metabolism; protoporphyrin-IX biosynthesis; 5-aminolevulinate from L-glutamyl-tRNA(Glu): step 1/2. In terms of biological role, catalyzes the NADPH-dependent reduction of glutamyl-tRNA(Glu) to glutamate 1-semialdehyde (GSA). The sequence is that of Glutamyl-tRNA reductase from Staphylococcus carnosus (strain TM300).